A 561-amino-acid chain; its full sequence is MRLWKSMAWGILLWHSQSGALCPAWPPARAAEEIARLQQQLADWNDIYWKQGVSAVDDSVYDQLSARLVQWQRCVGQDVSSTPVSPPLNGTTMHPVAHTGVRKLADRQAVEQWMRGRSELWVQPKVDGVAVTLVYQNGKLARAISRGNGLQGEDWTPKIRLIPSIPQTTQGALANAVLQGEIFLQREGHIQQRMGGMNARSKVAGMLMRQDNASALNSLGIFIWAWPDGPANMPERLSQLAKAGFSLTKKYSLAVKNASEVERARQSWLTSALPFVTDGVVIRMAKEPASQHWRPGQGDWLAAWKYPPVAQVAQVSAIQFSVGKSGKITVVASLVPVILDDKRVQRVNIGSVKRWEAWDIAPGDQILVSLAGQGIPRLDEVVWRSRERSKPVPPDSHFNSLTCFYASETCQEQFISRLVWLGSRSALGLDGMGEASWRALHQTHRFEHIFSWLALTSAQIANTPGFAKGKSEQIWRQFNLARRQPFTRWIMAMDIPLTQAALQASGDRSWEQLLMRTEQHWRQLPATGERRAGRVIDWRDNPQIKTLSRWLAAQHIPGFGS.

Residue Lys125 is the N6-AMP-lysine intermediate of the active site.

Belongs to the NAD-dependent DNA ligase family. LigB subfamily.

It catalyses the reaction NAD(+) + (deoxyribonucleotide)n-3'-hydroxyl + 5'-phospho-(deoxyribonucleotide)m = (deoxyribonucleotide)n+m + AMP + beta-nicotinamide D-nucleotide.. Its function is as follows. Catalyzes the formation of phosphodiester linkages between 5'-phosphoryl and 3'-hydroxyl groups in double-stranded DNA using NAD as a coenzyme and as the energy source for the reaction. This Salmonella paratyphi B (strain ATCC BAA-1250 / SPB7) protein is DNA ligase B.